Here is a 638-residue protein sequence, read N- to C-terminus: Sorting nexin-41 (638 aa).

Over residues 1–14 (MDSDTSPNPFASSP) the composition is skewed to low complexity. Residues 1 to 69 (MDSDTSPNPF…MGATVPGPKP (69 aa)) are disordered. Residues 15–30 (PSSPSPRPSLPPPVPR) show a composition bias toward pro residues. One can recognise a PX domain in the interval 84 to 201 (GEQVHIVDAL…HRFLEEDVSW (118 aa)). Residues R118, S120, K144, and R168 each coordinate a 1,2-diacyl-sn-glycero-3-phospho-(1D-myo-inositol-3-phosphate). Disordered regions lie at residues 215–239 (KNPLHAPSHNPTFQPTTPTSPSEAP), 408–432 (LERGGSVLASPQLEPEAARDERERA), and 545–638 (PHPN…LGPL). Low complexity predominate over residues 225–239 (PTFQPTTPTSPSEAP). The segment covering 423 to 432 (EAARDERERA) has biased composition (basic and acidic residues). A compositionally biased stretch (low complexity) spans 552 to 562 (QTQTQVQSQQS). Over residues 585 to 601 (MKNEIERVEIEIADKPL) the composition is skewed to basic and acidic residues.

It belongs to the sorting nexin family.

The protein resides in the endosome membrane. It localises to the endomembrane system. In terms of biological role, may be required for cytoplasm to vacuole transport (Cvt) and pexophagy. The protein is Sorting nexin-41 (SNX41) of Cryptococcus neoformans var. neoformans serotype D (strain B-3501A) (Filobasidiella neoformans).